Reading from the N-terminus, the 878-residue chain is DNA gyrase subunit A (878 aa).

Residues 34-533 (LPDVRDGLKP…NSADINIEDL (500 aa)) enclose the Topo IIA-type catalytic domain. Tyr122 serves as the catalytic O-(5'-phospho-DNA)-tyrosine intermediate. The GyrA-box signature appears at 560-566 (QRRGGKG). The segment at 844–878 (DDEELDAIDGSVAEGDEDIAPEAESDDDVADDADE) is disordered. The span at 857-878 (EGDEDIAPEAESDDDVADDADE) shows a compositional bias: acidic residues.

It belongs to the type II topoisomerase GyrA/ParC subunit family. In terms of assembly, heterotetramer, composed of two GyrA and two GyrB chains. In the heterotetramer, GyrA contains the active site tyrosine that forms a transient covalent intermediate with DNA, while GyrB binds cofactors and catalyzes ATP hydrolysis.

The protein localises to the cytoplasm. It carries out the reaction ATP-dependent breakage, passage and rejoining of double-stranded DNA.. A type II topoisomerase that negatively supercoils closed circular double-stranded (ds) DNA in an ATP-dependent manner to modulate DNA topology and maintain chromosomes in an underwound state, and also catalyzes the interconversion of other topological isomers of double-stranded DNA rings, including catenanes and knotted rings. Replenishes negative supercoiling downstream of highly transcribed genes to help control overall chromosomal supercoiling density. E.coli makes 15% more negative supercoils in pBR322 plasmid DNA than S.typhimurium; the S.typhimurium GyrB subunit is toxic in E.coli, while the E.coli copy can be expressed in S.typhimurium even though the 2 subunits have 777/804 residues identical. In terms of biological role, negative supercoiling favors strand separation, and DNA replication, transcription, recombination and repair, all of which involve strand separation. Type II topoisomerases break and join 2 DNA strands simultaneously in an ATP-dependent manner. This is DNA gyrase subunit A from Salmonella typhimurium (strain LT2 / SGSC1412 / ATCC 700720).